A 170-amino-acid chain; its full sequence is Large ribosomal subunit protein uL10 (170 aa).

The protein belongs to the universal ribosomal protein uL10 family. Part of the ribosomal stalk of the 50S ribosomal subunit. The N-terminus interacts with L11 and the large rRNA to form the base of the stalk. The C-terminus forms an elongated spine to which L12 dimers bind in a sequential fashion forming a multimeric L10(L12)X complex.

Its function is as follows. Forms part of the ribosomal stalk, playing a central role in the interaction of the ribosome with GTP-bound translation factors. The sequence is that of Large ribosomal subunit protein uL10 from Jannaschia sp. (strain CCS1).